Reading from the N-terminus, the 93-residue chain is Aspartyl/glutamyl-tRNA(Asn/Gln) amidotransferase subunit C (93 aa).

The protein belongs to the GatC family. Heterotrimer of A, B and C subunits.

It catalyses the reaction L-glutamyl-tRNA(Gln) + L-glutamine + ATP + H2O = L-glutaminyl-tRNA(Gln) + L-glutamate + ADP + phosphate + H(+). It carries out the reaction L-aspartyl-tRNA(Asn) + L-glutamine + ATP + H2O = L-asparaginyl-tRNA(Asn) + L-glutamate + ADP + phosphate + 2 H(+). In terms of biological role, allows the formation of correctly charged Asn-tRNA(Asn) or Gln-tRNA(Gln) through the transamidation of misacylated Asp-tRNA(Asn) or Glu-tRNA(Gln) in organisms which lack either or both of asparaginyl-tRNA or glutaminyl-tRNA synthetases. The reaction takes place in the presence of glutamine and ATP through an activated phospho-Asp-tRNA(Asn) or phospho-Glu-tRNA(Gln). The protein is Aspartyl/glutamyl-tRNA(Asn/Gln) amidotransferase subunit C of Methanocella arvoryzae (strain DSM 22066 / NBRC 105507 / MRE50).